We begin with the raw amino-acid sequence, 77 residues long: MARVCQVTGKGPMVGNNVSHANNKTKRRFMPNLQYRRIWVESENRWVRLRITAAGLRLIDKNGIDAVLVDLRARGEV.

This sequence belongs to the bacterial ribosomal protein bL28 family.

This Polaromonas naphthalenivorans (strain CJ2) protein is Large ribosomal subunit protein bL28.